We begin with the raw amino-acid sequence, 321 residues long: Endoglucanase 1 (321 aa).

A signal peptide spans 1-27; it reads MSRKLRTLMAALCALPLAFAAAPPAHA. D110 is an active-site residue. Residues C112 and C156 are joined by a disulfide bond. D149 serves as the catalytic Proton donor. D295 acts as the Nucleophile in catalysis.

The protein belongs to the glycosyl hydrolase 6 (cellulase B) family.

The enzyme catalyses Endohydrolysis of (1-&gt;4)-beta-D-glucosidic linkages in cellulose, lichenin and cereal beta-D-glucans.. Its function is as follows. Implicated in the mechanism of induction exerted by cellobiose. In Streptomyces halstedii, this protein is Endoglucanase 1 (celA1).